We begin with the raw amino-acid sequence, 232 residues long: Phosphoglycolate phosphatase (232 aa).

Aspartate 8 (nucleophile) is an active-site residue. Residues aspartate 8 and aspartate 10 each coordinate Mg(2+). Lysine 155 is a binding site for substrate. Mg(2+)-binding residues include aspartate 178 and aspartate 182.

The protein belongs to the archaeal SPP-like hydrolase family. Mg(2+) serves as cofactor.

The enzyme catalyses 2-phosphoglycolate + H2O = glycolate + phosphate. Catalyzes the dephosphorylation of 2-phosphoglycolate. In Methanospirillum hungatei JF-1 (strain ATCC 27890 / DSM 864 / NBRC 100397 / JF-1), this protein is Phosphoglycolate phosphatase.